The chain runs to 350 residues: GTPase Obg (350 aa).

An Obg domain is found at 1–159 (MKFIDEAKIT…WELALELKVL (159 aa)). A disordered region spans residues 17-43 (GDGSASFRREKYIPKGGPDGGDGGRGG). A compositionally biased stretch (gly residues) spans 33 to 43 (GPDGGDGGRGG). Positions 160–334 (ADVGLLGMPN…LTYAVMDYLG (175 aa)) constitute an OBG-type G domain. GTP contacts are provided by residues 166 to 173 (GMPNAGKS), 191 to 195 (FTTLA), 213 to 216 (DIPG), 284 to 287 (NKLD), and 315 to 317 (SAL). Serine 173 and threonine 193 together coordinate Mg(2+).

Belongs to the TRAFAC class OBG-HflX-like GTPase superfamily. OBG GTPase family. As to quaternary structure, monomer. It depends on Mg(2+) as a cofactor.

The protein resides in the cytoplasm. Its function is as follows. An essential GTPase which binds GTP, GDP and possibly (p)ppGpp with moderate affinity, with high nucleotide exchange rates and a fairly low GTP hydrolysis rate. Plays a role in control of the cell cycle, stress response, ribosome biogenesis and in those bacteria that undergo differentiation, in morphogenesis control. The chain is GTPase Obg from Thiobacillus denitrificans (strain ATCC 25259 / T1).